A 310-amino-acid chain; its full sequence is Ribose-phosphate pyrophosphokinase (310 aa).

ATP contacts are provided by residues Asp34–Glu36 and Arg93–Gln94. Mg(2+) is bound by residues His127 and Asp167. Residue Lys190 is part of the active site. D-ribose 5-phosphate-binding positions include Arg192, Asp216, and Asp220 to Thr224.

This sequence belongs to the ribose-phosphate pyrophosphokinase family. Class I subfamily. Homohexamer. Requires Mg(2+) as cofactor.

It is found in the cytoplasm. The catalysed reaction is D-ribose 5-phosphate + ATP = 5-phospho-alpha-D-ribose 1-diphosphate + AMP + H(+). It participates in metabolic intermediate biosynthesis; 5-phospho-alpha-D-ribose 1-diphosphate biosynthesis; 5-phospho-alpha-D-ribose 1-diphosphate from D-ribose 5-phosphate (route I): step 1/1. Its function is as follows. Involved in the biosynthesis of the central metabolite phospho-alpha-D-ribosyl-1-pyrophosphate (PRPP) via the transfer of pyrophosphoryl group from ATP to 1-hydroxyl of ribose-5-phosphate (Rib-5-P). This chain is Ribose-phosphate pyrophosphokinase, found in Granulibacter bethesdensis (strain ATCC BAA-1260 / CGDNIH1).